The primary structure comprises 129 residues: Small ribosomal subunit protein uS12 (129 aa).

2 disordered regions span residues 1–25 (MPTY…PALE) and 110–129 (RKQG…VTKK). The segment covering 10-20 (FGRKSKTRKTK) has biased composition (basic residues).

It belongs to the universal ribosomal protein uS12 family. As to quaternary structure, part of the 30S ribosomal subunit. Contacts proteins S8 and S17. May interact with IF1 in the 30S initiation complex.

Functionally, with S4 and S5 plays an important role in translational accuracy. In terms of biological role, interacts with and stabilizes bases of the 16S rRNA that are involved in tRNA selection in the A site and with the mRNA backbone. Located at the interface of the 30S and 50S subunits, it traverses the body of the 30S subunit contacting proteins on the other side and probably holding the rRNA structure together. The combined cluster of proteins S8, S12 and S17 appears to hold together the shoulder and platform of the 30S subunit. The sequence is that of Small ribosomal subunit protein uS12 from Rickettsia conorii (strain ATCC VR-613 / Malish 7).